The primary structure comprises 571 residues: Proline--tRNA ligase (571 aa).

It belongs to the class-II aminoacyl-tRNA synthetase family. ProS type 1 subfamily. As to quaternary structure, homodimer.

It localises to the cytoplasm. The enzyme catalyses tRNA(Pro) + L-proline + ATP = L-prolyl-tRNA(Pro) + AMP + diphosphate. In terms of biological role, catalyzes the attachment of proline to tRNA(Pro) in a two-step reaction: proline is first activated by ATP to form Pro-AMP and then transferred to the acceptor end of tRNA(Pro). As ProRS can inadvertently accommodate and process non-cognate amino acids such as alanine and cysteine, to avoid such errors it has two additional distinct editing activities against alanine. One activity is designated as 'pretransfer' editing and involves the tRNA(Pro)-independent hydrolysis of activated Ala-AMP. The other activity is designated 'posttransfer' editing and involves deacylation of mischarged Ala-tRNA(Pro). The misacylated Cys-tRNA(Pro) is not edited by ProRS. In Histophilus somni (strain 2336) (Haemophilus somnus), this protein is Proline--tRNA ligase.